The following is a 313-amino-acid chain: uncharacterized protein (313 aa).

The segment at Met-1 to Arg-313 is disordered. Composition is skewed to basic and acidic residues over residues Leu-24–Glu-33, Thr-40–Tyr-85, Thr-95–Gly-116, and Thr-156–Gly-181. Residues Arg-194 to Ser-205 show a composition bias toward basic residues. 2 stretches are compositionally biased toward low complexity: residues Asn-206–Ser-266 and Ser-272–Arg-313.

It is found in the virion. This is an uncharacterized protein from Acanthamoeba polyphaga mimivirus (APMV).